A 172-amino-acid chain; its full sequence is Probable metallophosphoesterase MTH_1774 (172 aa).

Aspartate 8, histidine 10, aspartate 37, asparagine 59, histidine 85, histidine 113, and histidine 115 together coordinate a divalent metal cation.

Belongs to the metallophosphoesterase superfamily. YfcE family. Requires a divalent metal cation as cofactor.

The chain is Probable metallophosphoesterase MTH_1774 from Methanothermobacter thermautotrophicus (strain ATCC 29096 / DSM 1053 / JCM 10044 / NBRC 100330 / Delta H) (Methanobacterium thermoautotrophicum).